Reading from the N-terminus, the 745-residue chain is Exocyst complex component 3 (745 aa).

K28 is modified (N6-acetyllysine).

Belongs to the SEC6 family. In terms of assembly, the exocyst complex is composed of EXOC1, EXOC2, EXOC3, EXOC4, EXOC5, EXOC6, EXOC7 and EXOC8. Interacts with EXOC3L1. Interacts with BIRC6/bruce. Interacts with MYRIP. Interacts with SLC6A9.

Its subcellular location is the cytoplasm. The protein resides in the perinuclear region. It is found in the cell projection. The protein localises to the growth cone. It localises to the neuron projection. Its subcellular location is the midbody. The protein resides in the golgi apparatus. Functionally, component of the exocyst complex involved in the docking of exocytic vesicles with fusion sites on the plasma membrane. In Bos taurus (Bovine), this protein is Exocyst complex component 3 (EXOC3).